The sequence spans 401 residues: Subtilisin-like protease 7 (401 aa).

The signal sequence occupies residues 1-20 (MGFITKAIPLALAAASVING). Residues 21 to 119 (AEILETRAGV…IERDARVQIN (99 aa)) constitute a propeptide that is removed on maturation. The region spanning 36–118 (KYIVVMNDGM…YIERDARVQI (83 aa)) is the Inhibitor I9 domain. Residue N58 is glycosylated (N-linked (GlcNAc...) asparagine). Positions 129 to 401 (SWGLARVGSR…SKLINNGSGM (273 aa)) constitute a Peptidase S8 domain. Active-site charge relay system residues include D161 and H193. N-linked (GlcNAc...) asparagine glycans are attached at residues N223 and N253. S347 acts as the Charge relay system in catalysis. The N-linked (GlcNAc...) asparagine glycan is linked to N397.

It belongs to the peptidase S8 family.

It localises to the secreted. Its function is as follows. Secreted subtilisin-like serine protease with keratinolytic activity that contributes to pathogenicity. The protein is Subtilisin-like protease 7 (SUB7) of Trichophyton tonsurans (Scalp ringworm fungus).